A 279-amino-acid polypeptide reads, in one-letter code: NAD kinase (279 aa).

Aspartate 57 (proton acceptor) is an active-site residue. NAD(+) contacts are provided by residues 57–58, 133–134, arginine 159, aspartate 161, and 172–177; these read DG, NE, and TAYNKS.

Belongs to the NAD kinase family. A divalent metal cation is required as a cofactor.

The protein localises to the cytoplasm. It carries out the reaction NAD(+) + ATP = ADP + NADP(+) + H(+). Involved in the regulation of the intracellular balance of NAD and NADP, and is a key enzyme in the biosynthesis of NADP. Catalyzes specifically the phosphorylation on 2'-hydroxyl of the adenosine moiety of NAD to yield NADP. In Streptococcus pyogenes serotype M12 (strain MGAS2096), this protein is NAD kinase.